The following is a 394-amino-acid chain: Elongation factor Tu 2 (394 aa).

The region spanning 10-204 is the tr-type G domain; that stretch reads KPHVNVGTIG…ALDTYIPEPE (195 aa). Residues 19-26 are G1; sequence GHVDHGKT. 19–26 is a binding site for GTP; sequence GHVDHGKT. Thr26 is a binding site for Mg(2+). A G2 region spans residues 60–64; the sequence is GITIS. Residues 81–84 are G3; that stretch reads DCPG. GTP-binding positions include 81–85 and 136–139; these read DCPGH and NKCD. The G4 stretch occupies residues 136–139; that stretch reads NKCD. Residues 174-176 form a G5 region; sequence SAL.

It belongs to the TRAFAC class translation factor GTPase superfamily. Classic translation factor GTPase family. EF-Tu/EF-1A subfamily. In terms of assembly, monomer.

The protein localises to the cytoplasm. It catalyses the reaction GTP + H2O = GDP + phosphate + H(+). In terms of biological role, GTP hydrolase that promotes the GTP-dependent binding of aminoacyl-tRNA to the A-site of ribosomes during protein biosynthesis. This Vibrio vulnificus (strain CMCP6) protein is Elongation factor Tu 2.